Here is an 806-residue protein sequence, read N- to C-terminus: Leucine--tRNA ligase (806 aa).

The 'HIGH' region motif lies at 40–51; it reads PYPSGTGLHVGH. The short motif at 576–580 is the 'KMSKS' region element; the sequence is KMSKS. Residue Lys579 participates in ATP binding.

The protein belongs to the class-I aminoacyl-tRNA synthetase family.

It is found in the cytoplasm. It catalyses the reaction tRNA(Leu) + L-leucine + ATP = L-leucyl-tRNA(Leu) + AMP + diphosphate. The polypeptide is Leucine--tRNA ligase (Prosthecochloris aestuarii (strain DSM 271 / SK 413)).